A 276-amino-acid chain; its full sequence is 4-diphosphocytidyl-2-C-methyl-D-erythritol kinase (276 aa).

Residue lysine 13 is part of the active site. 94–104 (PHAGGIGGGSA) serves as a coordination point for ATP. Aspartate 131 is a catalytic residue.

It belongs to the GHMP kinase family. IspE subfamily.

It carries out the reaction 4-CDP-2-C-methyl-D-erythritol + ATP = 4-CDP-2-C-methyl-D-erythritol 2-phosphate + ADP + H(+). Its pathway is isoprenoid biosynthesis; isopentenyl diphosphate biosynthesis via DXP pathway; isopentenyl diphosphate from 1-deoxy-D-xylulose 5-phosphate: step 3/6. Functionally, catalyzes the phosphorylation of the position 2 hydroxy group of 4-diphosphocytidyl-2C-methyl-D-erythritol. The protein is 4-diphosphocytidyl-2-C-methyl-D-erythritol kinase of Jannaschia sp. (strain CCS1).